The primary structure comprises 1019 residues: UPF0182 protein Tery_0938 (1019 aa).

A run of 9 helical transmembrane segments spans residues 23–43 (IHIL…GFST), 67–87 (TETW…LVNL), 128–148 (LSLS…GLIL), 192–212 (LWLL…PILW), 213–233 (LSVF…SHWA), 270–290 (FWLI…YLLS), 313–333 (LGGG…FELL), 355–375 (YVFL…QAIF), and 416–436 (AILT…PKIV).

It belongs to the UPF0182 family.

The protein localises to the cell membrane. This is UPF0182 protein Tery_0938 from Trichodesmium erythraeum (strain IMS101).